The chain runs to 252 residues: Protein BTG3 (252 aa).

The disordered stretch occupies residues 138 to 162; the sequence is VTSDYHSGSSSSDEETSKEMEVKPS.

The protein belongs to the BTG family. In terms of tissue distribution, ubiquitous. High expression in the ventricular zone of the developing central nervous system. High in ovary, testis, prostate, thymus and lung.

In terms of biological role, overexpression impairs serum-induced cell cycle progression from the G0/G1 to S phase. This Homo sapiens (Human) protein is Protein BTG3 (BTG3).